A 552-amino-acid chain; its full sequence is CTP synthase (552 aa).

The tract at residues 1 to 270 (MTKYVFVTGG…DRIICEELKL (270 aa)) is amidoligase domain. S13 serves as a coordination point for CTP. A UTP-binding site is contributed by S13. ATP-binding positions include 14 to 19 (SLGKGI) and D71. 2 residues coordinate Mg(2+): D71 and E144. CTP is bound by residues 151 to 153 (DIE), 191 to 196 (KTKPTQ), and K227. UTP contacts are provided by residues 191 to 196 (KTKPTQ) and K227. The Glutamine amidotransferase type-1 domain maps to 295–547 (TIGMVGKYVD…VEAAFANKQA (253 aa)). Residue G356 participates in L-glutamine binding. Catalysis depends on C383, which acts as the Nucleophile; for glutamine hydrolysis. Residues 384 to 387 (LGMQ), E407, and R473 each bind L-glutamine. Residues H520 and E522 contribute to the active site.

This sequence belongs to the CTP synthase family. As to quaternary structure, homotetramer.

The catalysed reaction is UTP + L-glutamine + ATP + H2O = CTP + L-glutamate + ADP + phosphate + 2 H(+). It catalyses the reaction L-glutamine + H2O = L-glutamate + NH4(+). The enzyme catalyses UTP + NH4(+) + ATP = CTP + ADP + phosphate + 2 H(+). It functions in the pathway pyrimidine metabolism; CTP biosynthesis via de novo pathway; CTP from UDP: step 2/2. Its activity is regulated as follows. Allosterically activated by GTP, when glutamine is the substrate; GTP has no effect on the reaction when ammonia is the substrate. The allosteric effector GTP functions by stabilizing the protein conformation that binds the tetrahedral intermediate(s) formed during glutamine hydrolysis. Inhibited by the product CTP, via allosteric rather than competitive inhibition. In terms of biological role, catalyzes the ATP-dependent amination of UTP to CTP with either L-glutamine or ammonia as the source of nitrogen. Regulates intracellular CTP levels through interactions with the four ribonucleotide triphosphates. The polypeptide is CTP synthase (Burkholderia ambifaria (strain ATCC BAA-244 / DSM 16087 / CCUG 44356 / LMG 19182 / AMMD) (Burkholderia cepacia (strain AMMD))).